A 111-amino-acid chain; its full sequence is Protein YibV (111 aa).

In Escherichia coli O157:H7, this protein is Protein YibV (yibV).